A 942-amino-acid polypeptide reads, in one-letter code: Exopolysaccharide phosphotransferase SCO2592 (942 aa).

This sequence belongs to the stealth family.

This is Exopolysaccharide phosphotransferase SCO2592 from Streptomyces coelicolor (strain ATCC BAA-471 / A3(2) / M145).